The primary structure comprises 384 residues: Alanine racemase (384 aa).

Lysine 39 functions as the Proton acceptor; specific for D-alanine in the catalytic mechanism. Lysine 39 bears the N6-(pyridoxal phosphate)lysine mark. A substrate-binding site is contributed by arginine 136. Tyrosine 265 acts as the Proton acceptor; specific for L-alanine in catalysis. Methionine 312 is a substrate binding site.

Belongs to the alanine racemase family. Pyridoxal 5'-phosphate serves as cofactor.

The catalysed reaction is L-alanine = D-alanine. The protein operates within amino-acid biosynthesis; D-alanine biosynthesis; D-alanine from L-alanine: step 1/1. In terms of biological role, catalyzes the interconversion of L-alanine and D-alanine. May also act on other amino acids. The sequence is that of Alanine racemase (alr) from Geobacillus kaustophilus (strain HTA426).